A 481-amino-acid polypeptide reads, in one-letter code: UDP-N-acetylmuramoyl-L-alanyl-D-glutamate--L-lysine ligase (481 aa).

Ser-42 serves as a coordination point for UDP-N-acetyl-alpha-D-muramoyl-L-alanyl-D-glutamate. Gly-118 to Thr-124 is a binding site for ATP. Residues Gln-158, Thr-160–Thr-161, Ser-187, and Arg-195 contribute to the UDP-N-acetyl-alpha-D-muramoyl-L-alanyl-D-glutamate site. N6-carboxylysine is present on Lys-229. The L-lysine recognition motif motif lies at Asp-404 to Asn-407.

The protein belongs to the MurCDEF family. MurE subfamily. In terms of processing, carboxylation is probably crucial for Mg(2+) binding and, consequently, for the gamma-phosphate positioning of ATP.

The protein localises to the cytoplasm. It carries out the reaction UDP-N-acetyl-alpha-D-muramoyl-L-alanyl-D-glutamate + L-lysine + ATP = UDP-N-acetyl-alpha-D-muramoyl-L-alanyl-gamma-D-glutamyl-L-lysine + ADP + phosphate + H(+). Its pathway is cell wall biogenesis; peptidoglycan biosynthesis. Functionally, catalyzes the addition of L-lysine to the nucleotide precursor UDP-N-acetylmuramoyl-L-alanyl-D-glutamate (UMAG) in the biosynthesis of bacterial cell-wall peptidoglycan. The polypeptide is UDP-N-acetylmuramoyl-L-alanyl-D-glutamate--L-lysine ligase (Streptococcus pyogenes serotype M3 (strain SSI-1)).